A 1129-amino-acid polypeptide reads, in one-letter code: ATP-dependent DNA helicase mph1 (1129 aa).

Disordered stretches follow at residues 1–101 (MTGS…FEDA), 124–222 (TQLT…QNEG), and 236–306 (DAFD…TQHK). Residues 45–63 (DGTASDVRRRPSENRESQR) are compositionally biased toward basic and acidic residues. 2 stretches are compositionally biased toward polar residues: residues 203 to 222 (NTKA…QNEG) and 242 to 285 (ISLS…QTDQ). Residues 297 to 306 (QKDEPPTQHK) show a composition bias toward basic and acidic residues. One can recognise a Helicase ATP-binding domain in the interval 331 to 499 (IAQKGLFHNL…AVIDGLDIAR (169 aa)). Residue 344–351 (LPTGLGKT) participates in ATP binding. A DEAH box motif is present at residues 447-450 (DEAH). The 170-residue stretch at 674 to 843 (VLNHFMDAGE…GSRFTFHDDI (170 aa)) folds into the Helicase C-terminal domain. 3 disordered regions span residues 863 to 930 (IPDE…VEIP), 1018 to 1060 (RQGD…STED), and 1072 to 1129 (SVVK…DSDD). Basic residues-rich tracts occupy residues 877 to 889 (RRGR…PKKF) and 1028 to 1044 (SPRH…KPRY). The segment covering 1077-1086 (QKQQPFYSSQ) has biased composition (polar residues).

Belongs to the DEAD box helicase family. DEAH subfamily. FANCM sub-subfamily. Interacts with the MHF histone-fold complex to form the FANCM-MHF complex.

The protein localises to the nucleus. The catalysed reaction is ATP + H2O = ADP + phosphate + H(+). In terms of biological role, ATP-dependent DNA helicase involved in DNA damage repair by homologous recombination and in genome maintenance. Capable of unwinding D-loops. Plays a role in limiting crossover recombinants during mitotic DNA double-strand break (DSB) repair. Component of a FANCM-MHF complex which promotes gene conversion at blocked replication forks, probably by reversal of the stalled fork. This is ATP-dependent DNA helicase mph1 from Aspergillus oryzae (strain ATCC 42149 / RIB 40) (Yellow koji mold).